We begin with the raw amino-acid sequence, 377 residues long: Nitric oxide reductase FlRd-NAD(+) reductase (377 aa).

Belongs to the FAD-dependent oxidoreductase family. FAD serves as cofactor.

Its subcellular location is the cytoplasm. It catalyses the reaction 2 reduced [nitric oxide reductase rubredoxin domain] + NAD(+) + H(+) = 2 oxidized [nitric oxide reductase rubredoxin domain] + NADH. The protein operates within nitrogen metabolism; nitric oxide reduction. One of at least two accessory proteins for anaerobic nitric oxide (NO) reductase. Reduces the rubredoxin moiety of NO reductase. The polypeptide is Nitric oxide reductase FlRd-NAD(+) reductase (Citrobacter koseri (strain ATCC BAA-895 / CDC 4225-83 / SGSC4696)).